Here is a 488-residue protein sequence, read N- to C-terminus: ATP synthase subunit beta (488 aa).

164-171 (GGAGVGKT) lines the ATP pocket.

Belongs to the ATPase alpha/beta chains family. F-type ATPases have 2 components, CF(1) - the catalytic core - and CF(0) - the membrane proton channel. CF(1) has five subunits: alpha(3), beta(3), gamma(1), delta(1), epsilon(1). CF(0) has four main subunits: a(1), b(1), b'(1) and c(9-12).

It is found in the cellular thylakoid membrane. The catalysed reaction is ATP + H2O + 4 H(+)(in) = ADP + phosphate + 5 H(+)(out). In terms of biological role, produces ATP from ADP in the presence of a proton gradient across the membrane. The catalytic sites are hosted primarily by the beta subunits. The polypeptide is ATP synthase subunit beta (Prochlorococcus marinus (strain MIT 9211)).